Consider the following 79-residue polypeptide: Large ribosomal subunit protein uL24 (79 aa).

It belongs to the universal ribosomal protein uL24 family. In terms of assembly, part of the 50S ribosomal subunit.

One of two assembly initiator proteins, it binds directly to the 5'-end of the 23S rRNA, where it nucleates assembly of the 50S subunit. In terms of biological role, one of the proteins that surrounds the polypeptide exit tunnel on the outside of the subunit. This chain is Large ribosomal subunit protein uL24, found in Aliarcobacter butzleri (strain RM4018) (Arcobacter butzleri).